The following is a 265-amino-acid chain: Undecaprenyl-diphosphatase (265 aa).

7 helical membrane passes run 42–62 (AATF…VLYW), 82–102 (GIVL…LLHA), 108–128 (LFRP…MILV), 157–177 (LALW…MLLG), 181–201 (PLAA…ATGY), 217–237 (FFLV…KVFV), and 244–264 (TLIP…YFMV).

The protein belongs to the UppP family.

It is found in the cell inner membrane. It carries out the reaction di-trans,octa-cis-undecaprenyl diphosphate + H2O = di-trans,octa-cis-undecaprenyl phosphate + phosphate + H(+). Catalyzes the dephosphorylation of undecaprenyl diphosphate (UPP). Confers resistance to bacitracin. The protein is Undecaprenyl-diphosphatase of Desulfovibrio desulfuricans (strain ATCC 27774 / DSM 6949 / MB).